The chain runs to 249 residues: MEWSDEGIILGVRRHGEAGAIVELLTRSHGRHLGLVRGGASSRMRPLLQPGNSVLAVWRARLDEHLGYYQLEGTRMRAATMLASSHAVYGVTHLASLARLLPERDPHEDIYEMLERTLDDFDDVGDAATHLIRFELAMLAELGFGLDLSACAATGATVELIYVSPKSGSAVSRAAGEPWRDKLLRLPAFLRDDNDGRNGWSDQDLRDGFDLTGRFLLRNVLEPRGQGHSDARDGFINAVTRHLARTAIP.

This sequence belongs to the RecO family.

Functionally, involved in DNA repair and RecF pathway recombination. The polypeptide is DNA repair protein RecO (Rhodopseudomonas palustris (strain BisB5)).